Consider the following 145-residue polypeptide: UPF0179 protein TV1250 (145 aa).

It belongs to the UPF0179 family.

This chain is UPF0179 protein TV1250, found in Thermoplasma volcanium (strain ATCC 51530 / DSM 4299 / JCM 9571 / NBRC 15438 / GSS1).